We begin with the raw amino-acid sequence, 682 residues long: Potassium-transporting ATPase ATP-binding subunit (682 aa).

Helical transmembrane passes span P34–V54, I58–F78, I219–L239, and V254–I274. Residue D307 is the 4-aspartylphosphate intermediate of the active site. ATP contacts are provided by residues D344, E348, F377–S384, and K395. The Mg(2+) site is built by D518 and D522. The next 3 helical transmembrane spans lie at F588–M608, A616–L636, and L662–A682.

It belongs to the cation transport ATPase (P-type) (TC 3.A.3) family. Type IA subfamily. In terms of assembly, the system is composed of three essential subunits: KdpA, KdpB and KdpC.

It localises to the cell inner membrane. It carries out the reaction K(+)(out) + ATP + H2O = K(+)(in) + ADP + phosphate + H(+). In terms of biological role, part of the high-affinity ATP-driven potassium transport (or Kdp) system, which catalyzes the hydrolysis of ATP coupled with the electrogenic transport of potassium into the cytoplasm. This subunit is responsible for energy coupling to the transport system and for the release of the potassium ions to the cytoplasm. This Salmonella enteritidis PT4 (strain P125109) protein is Potassium-transporting ATPase ATP-binding subunit.